Here is an 89-residue protein sequence, read N- to C-terminus: Small ribosomal subunit protein uS15 (89 aa).

This sequence belongs to the universal ribosomal protein uS15 family. As to quaternary structure, part of the 30S ribosomal subunit. Forms a bridge to the 50S subunit in the 70S ribosome, contacting the 23S rRNA.

One of the primary rRNA binding proteins, it binds directly to 16S rRNA where it helps nucleate assembly of the platform of the 30S subunit by binding and bridging several RNA helices of the 16S rRNA. In terms of biological role, forms an intersubunit bridge (bridge B4) with the 23S rRNA of the 50S subunit in the ribosome. This chain is Small ribosomal subunit protein uS15, found in Micrococcus luteus (strain ATCC 4698 / DSM 20030 / JCM 1464 / CCM 169 / CCUG 5858 / IAM 1056 / NBRC 3333 / NCIMB 9278 / NCTC 2665 / VKM Ac-2230) (Micrococcus lysodeikticus).